Consider the following 556-residue polypeptide: Endonuclease/exonuclease/phosphatase family domain-containing protein 1 (556 aa).

Residues 39–68 form the HhH domain; sequence ERLNINTATEEELMTLPGVTRQVAQNIVEY.

In Xenopus laevis (African clawed frog), this protein is Endonuclease/exonuclease/phosphatase family domain-containing protein 1 (eepd1).